A 79-amino-acid chain; its full sequence is Exodeoxyribonuclease 7 small subunit (79 aa).

This sequence belongs to the XseB family. As to quaternary structure, heterooligomer composed of large and small subunits.

It is found in the cytoplasm. The catalysed reaction is Exonucleolytic cleavage in either 5'- to 3'- or 3'- to 5'-direction to yield nucleoside 5'-phosphates.. In terms of biological role, bidirectionally degrades single-stranded DNA into large acid-insoluble oligonucleotides, which are then degraded further into small acid-soluble oligonucleotides. The chain is Exodeoxyribonuclease 7 small subunit from Dechloromonas aromatica (strain RCB).